An 856-amino-acid chain; its full sequence is TPR repeat-containing protein TP_0123 (856 aa).

TPR repeat units follow at residues 107–140 (YAAVRCVRALYQTLDTYEKQVKEFRILMDVVADD), 523–556 (YRTFSLLGFLTIGQSKFEDALVYFGYALDDAEQL), and 603–636 (TVSLFMQGRISLSLGEYAQARRCFDEAADFALQY).

The protein is TPR repeat-containing protein TP_0123 of Treponema pallidum (strain Nichols).